Reading from the N-terminus, the 269-residue chain is Subtilisin Savinase (269 aa).

Gln-2 is a binding site for Ca(2+). The Peptidase S8 domain maps to 5–268 (PWGISRVQAP…SGLVNAEAAT (264 aa)). The active-site Charge relay system is Asp-32. Position 40 (Asp-40) interacts with Ca(2+). The active-site Charge relay system is His-62. Leu-73, Asn-75, Ile-77, Val-79, Ala-163, Tyr-165, and Ala-168 together coordinate Ca(2+). Ser-215 serves as the catalytic Charge relay system.

Belongs to the peptidase S8 family. Ca(2+) is required as a cofactor.

It is found in the secreted. It catalyses the reaction Hydrolysis of proteins with broad specificity for peptide bonds, and a preference for a large uncharged residue in P1. Hydrolyzes peptide amides.. Subtilisin is an extracellular alkaline serine protease, it catalyzes the hydrolysis of proteins and peptide amides. This chain is Subtilisin Savinase, found in Lederbergia lenta (Bacillus lentus).